Here is a 219-residue protein sequence, read N- to C-terminus: KP6 killer toxin (219 aa).

The first 19 residues, Met1–Ala19, serve as a signal peptide directing secretion. Positions Leu20–Arg27 are excised as a propeptide. 4 cysteine pairs are disulfide-bonded: Cys32–Cys39, Cys43–Cys101, Cys45–Cys92, and Cys62–Cys78. Asn98 is a glycosylation site (N-linked (GlcNAc...) asparagine; by host). Positions Lys106–Arg138 are excised as a propeptide. The tract at residues Gly120–Pro142 is disordered.

As to quaternary structure, heterodimer of two small polypeptides that are not covalently linked.

The protein localises to the secreted. Functionally, this protein is lethal to sensitive cells of the same or related species. The KP6 alpha subunit is known to recognize some cellular receptors before interaction of the complex with KP6 beta, precipitating cell death. In Ustilago maydis P6 virus (UmV6), this protein is KP6 killer toxin.